The primary structure comprises 50 residues: Photosystem II reaction center protein M (50 aa).

Residues 7–27 (GFIISLLFVGIPTIFLVGLYI) form a helical membrane-spanning segment. Residues 31–50 (DGEKSSFFSDSSKGKLGPKS) are disordered.

Belongs to the PsbM family. In terms of assembly, PSII is composed of 1 copy each of membrane proteins PsbA, PsbB, PsbC, PsbD, PsbE, PsbF, PsbH, PsbI, PsbJ, PsbK, PsbL, PsbM, PsbT, PsbX, PsbY, Psb30/Ycf12, peripheral proteins PsbO, CyanoQ (PsbQ), PsbU, PsbV and a large number of cofactors. It forms dimeric complexes.

It is found in the cellular thylakoid membrane. Its function is as follows. One of the components of the core complex of photosystem II (PSII). PSII is a light-driven water:plastoquinone oxidoreductase that uses light energy to abstract electrons from H(2)O, generating O(2) and a proton gradient subsequently used for ATP formation. It consists of a core antenna complex that captures photons, and an electron transfer chain that converts photonic excitation into a charge separation. This subunit is found at the monomer-monomer interface. In Prochlorococcus marinus (strain SARG / CCMP1375 / SS120), this protein is Photosystem II reaction center protein M.